Here is a 341-residue protein sequence, read N- to C-terminus: S-adenosylmethionine:tRNA ribosyltransferase-isomerase (341 aa).

This sequence belongs to the QueA family. As to quaternary structure, monomer.

It localises to the cytoplasm. The enzyme catalyses 7-aminomethyl-7-carbaguanosine(34) in tRNA + S-adenosyl-L-methionine = epoxyqueuosine(34) in tRNA + adenine + L-methionine + 2 H(+). It participates in tRNA modification; tRNA-queuosine biosynthesis. In terms of biological role, transfers and isomerizes the ribose moiety from AdoMet to the 7-aminomethyl group of 7-deazaguanine (preQ1-tRNA) to give epoxyqueuosine (oQ-tRNA). This chain is S-adenosylmethionine:tRNA ribosyltransferase-isomerase, found in Clostridium beijerinckii (strain ATCC 51743 / NCIMB 8052) (Clostridium acetobutylicum).